The following is a 420-amino-acid chain: Gamma-glutamyl phosphate reductase (420 aa).

It belongs to the gamma-glutamyl phosphate reductase family.

The protein localises to the cytoplasm. It carries out the reaction L-glutamate 5-semialdehyde + phosphate + NADP(+) = L-glutamyl 5-phosphate + NADPH + H(+). It functions in the pathway amino-acid biosynthesis; L-proline biosynthesis; L-glutamate 5-semialdehyde from L-glutamate: step 2/2. Functionally, catalyzes the NADPH-dependent reduction of L-glutamate 5-phosphate into L-glutamate 5-semialdehyde and phosphate. The product spontaneously undergoes cyclization to form 1-pyrroline-5-carboxylate. The sequence is that of Gamma-glutamyl phosphate reductase from Streptococcus pneumoniae (strain CGSP14).